Reading from the N-terminus, the 260-residue chain is Large ribosomal subunit protein uL4 (260 aa).

Belongs to the universal ribosomal protein uL4 family. As to quaternary structure, part of the 50S ribosomal subunit.

Its function is as follows. One of the primary rRNA binding proteins, this protein initially binds near the 5'-end of the 23S rRNA. It is important during the early stages of 50S assembly. It makes multiple contacts with different domains of the 23S rRNA in the assembled 50S subunit and ribosome. Forms part of the polypeptide exit tunnel. The sequence is that of Large ribosomal subunit protein uL4 from Methanopyrus kandleri (strain AV19 / DSM 6324 / JCM 9639 / NBRC 100938).